We begin with the raw amino-acid sequence, 549 residues long: Glucose-6-phosphate isomerase (549 aa).

The active-site Proton donor is the Glu-354. Catalysis depends on residues His-385 and Lys-513.

This sequence belongs to the GPI family.

Its subcellular location is the cytoplasm. It catalyses the reaction alpha-D-glucose 6-phosphate = beta-D-fructose 6-phosphate. It functions in the pathway carbohydrate biosynthesis; gluconeogenesis. The protein operates within carbohydrate degradation; glycolysis; D-glyceraldehyde 3-phosphate and glycerone phosphate from D-glucose: step 2/4. In terms of biological role, catalyzes the reversible isomerization of glucose-6-phosphate to fructose-6-phosphate. This Nitrosococcus oceani (strain ATCC 19707 / BCRC 17464 / JCM 30415 / NCIMB 11848 / C-107) protein is Glucose-6-phosphate isomerase.